Consider the following 511-residue polypeptide: Histidine ammonia-lyase (511 aa).

A cross-link (5-imidazolinone (Ala-Gly)) is located at residues Ala142 to Gly144. The residue at position 143 (Ser143) is a 2,3-didehydroalanine (Ser).

Belongs to the PAL/histidase family. In terms of processing, contains an active site 4-methylidene-imidazol-5-one (MIO), which is formed autocatalytically by cyclization and dehydration of residues Ala-Ser-Gly.

The protein resides in the cytoplasm. The catalysed reaction is L-histidine = trans-urocanate + NH4(+). Its pathway is amino-acid degradation; L-histidine degradation into L-glutamate; N-formimidoyl-L-glutamate from L-histidine: step 1/3. This Brucella suis biovar 1 (strain 1330) protein is Histidine ammonia-lyase.